The chain runs to 289 residues: MMTQWPSPAKLNLFLYITGQRADGYHTLQTLFQFVDYGDTISIEPRQDGEIHLLTPVDDVASEDNLIVRAARLLVQAAANSGRLPEHYGADIGVEKRLPMGGGLGGGSSNAATVLVALNHLWGCGFSQDELATLGLTLGADVPVFVRGHAAFAEGVGEILTPVDPPEKWYLIAHPGVSIPTPVIFNDPELPRNTPVRSIETLLKCEFGNDCEVIARKRFRKVDAALSWLLEYAPSRLTGTGSCVFAEFDTESAARQVLEQAPEWLHGFVARGMNTSPLQQTILAQTEFR.

K10 is a catalytic residue. Residue 99 to 109 (PMGGGLGGGSS) coordinates ATP. D141 is a catalytic residue.

This sequence belongs to the GHMP kinase family. IspE subfamily. Homodimer.

The enzyme catalyses 4-CDP-2-C-methyl-D-erythritol + ATP = 4-CDP-2-C-methyl-D-erythritol 2-phosphate + ADP + H(+). It participates in isoprenoid biosynthesis; isopentenyl diphosphate biosynthesis via DXP pathway; isopentenyl diphosphate from 1-deoxy-D-xylulose 5-phosphate: step 3/6. Its function is as follows. Catalyzes the phosphorylation of the position 2 hydroxy group of 4-diphosphocytidyl-2C-methyl-D-erythritol. This Enterobacter sp. (strain 638) protein is 4-diphosphocytidyl-2-C-methyl-D-erythritol kinase.